Here is a 330-residue protein sequence, read N- to C-terminus: MLLFLVFILVVSQVVLLLLSPQFRDKFIFRWYYDEVYKPMILDNSRYRIKFYVVPVFYLSVYSYMVYIFYSRTFAIISPMLTSIETYVVIPLMLILPLFFGSMSMIIKPDSSNAHQIGSEKRYPYDNLLYFPQHECRTCKQVKPARSKHCTVCNSCIYLADHHCVWINNCVGMGNYMYFYSFLCSNLLLLSYSFIRLIFIQFNKSAYNTTPTGEKSLLILSILCGSFTVILAVYCYFVFELVNSGMTTNEKDKWQMVHDYINTGDLVRDPEGKYFIKYQNGGNNYEFYSTDSYDGTQYTIVDYFTVKSPAEITNIYDKGNFINNLREFIG.

A helical membrane pass occupies residues 1 to 21 (MLLFLVFILVVSQVVLLLLSP). Residues 22–50 (QFRDKFIFRWYYDEVYKPMILDNSRYRIK) are Cytoplasmic-facing. The helical transmembrane segment at 51-71 (FYVVPVFYLSVYSYMVYIFYS) threads the bilayer. At 72-86 (RTFAIISPMLTSIET) the chain is on the lumenal side. A helical transmembrane segment spans residues 87–107 (YVVIPLMLILPLFFGSMSMII). Topologically, residues 108 to 181 (KPDSSNAHQI…GMGNYMYFYS (74 aa)) are cytoplasmic. Residues 134–184 (HECRTCKQVKPARSKHCTVCNSCIYLADHHCVWINNCVGMGNYMYFYSFLC) form the DHHC domain. A helical membrane pass occupies residues 182 to 202 (FLCSNLLLLSYSFIRLIFIQF). Residues 203–218 (NKSAYNTTPTGEKSLL) are Lumenal-facing. The chain crosses the membrane as a helical span at residues 219–239 (ILSILCGSFTVILAVYCYFVF). Over 240 to 330 (ELVNSGMTTN…FINNLREFIG (91 aa)) the chain is Cytoplasmic.

It belongs to the DHHC palmitoyltransferase family. SWF1 subfamily.

It is found in the endoplasmic reticulum membrane. It carries out the reaction L-cysteinyl-[protein] + hexadecanoyl-CoA = S-hexadecanoyl-L-cysteinyl-[protein] + CoA. In terms of biological role, palmitoyltransferase that targets several endosomal SNAREs. Palmitoylates the SNAREs at cysteine residues close to the cytoplasmic end of their transmembrane domain. May have a role in the cellular quality control of transmembrane domain-containing proteins. The polypeptide is Palmitoyltransferase SWF1 (SWF1) (Candida glabrata (strain ATCC 2001 / BCRC 20586 / JCM 3761 / NBRC 0622 / NRRL Y-65 / CBS 138) (Yeast)).